The primary structure comprises 527 residues: Eukaryotic translation initiation factor 2 subunit gamma (527 aa).

The tract at residues 1-83 (MSDLQDQEPS…GLPEQPLNPD (83 aa)) is disordered. At threonine 60 the chain carries Phosphothreonine. In terms of domain architecture, tr-type G spans 98–307 (QATINIGTIG…IVKTIPVPPR (210 aa)). Residues 107 to 114 (GHVAHGKS) form a G1 region. 110–115 (AHGKST) provides a ligand contact to GTP. A G2 region spans residues 135-139 (NITIK). A G3 region spans residues 193–196 (DCPG). 249–252 (NKVD) is a binding site for GTP. The segment at 249–252 (NKVD) is G4. Position 258 is a phosphoserine (serine 258). 284 to 286 (SAQ) is a GTP binding site. Residues 284-286 (SAQ) are G5. Residues 515–527 (ATIKKGTTLEPIA) form an interacts with CDC123 region.

The protein belongs to the TRAFAC class translation factor GTPase superfamily. Classic translation factor GTPase family. EIF2G subfamily. In terms of assembly, eukaryotic translation initiation factor 2 eIF2 is a heterotrimeric complex composed of an alpha, a beta and a gamma subunit. The factors eIF-1, eIF-1A, eIF-2, eIF-3, TIF5/eIF-5 and methionyl-tRNAi form a multifactor complex (MFC) that may bind to the 40S ribosome. Interacts (via C-terminus) with CDC123; the interaction is direct. Interacts with GCD1. Interacts with the eIF2B complex subunits GCD6 and GCD7. Interacts with methionyl-initiator methionine tRNA.

The protein resides in the cytoplasm. Its subcellular location is the cytosol. The catalysed reaction is GTP + H2O = GDP + phosphate + H(+). As a subunit of eukaryotic initiation factor 2 eIF2, involved in the early steps of protein synthesis. In the presence of GTP, eIF-2 forms a ternary complex with initiator tRNA Met-tRNAi and then recruits the 40S ribosomal complex and initiation factors eIF-1, eIF-1A and eIF-3 to form the 43S pre-initiation complex (43S PIC), a step that determines the rate of protein translation. The 43S PIC binds to mRNA and scans downstream to the initiation codon, where it forms a 48S initiation complex by codon-anticodon base pairing. This leads to the displacement of eIF-1 to allow GTPase-activating protein (GAP) eIF-5-mediated hydrolysis of eIF2-bound GTP. Hydrolysis of GTP and release of Pi, which makes GTP hydrolysis irreversible, causes the release of the eIF-2-GDP binary complex from the 40S subunit, an event that is essential for the subsequent joining of the 60S ribosomal subunit to form an elongation-competent 80S ribosome. In order for eIF-2 to recycle and catalyze another round of initiation, the GDP bound to eIF-2 must be exchanged with GTP by way of a reaction catalyzed by GDP-GTP exchange factor (GEF) eIF-2B. The chain is Eukaryotic translation initiation factor 2 subunit gamma (GCD11) from Saccharomyces cerevisiae (strain ATCC 204508 / S288c) (Baker's yeast).